Here is a 297-residue protein sequence, read N- to C-terminus: Aspartate dehydrogenase domain-containing protein (297 aa).

Residues Ser24 and Ser172 each carry the phosphoserine modification.

This sequence belongs to the L-aspartate dehydrogenase family.

The polypeptide is Aspartate dehydrogenase domain-containing protein (Rattus norvegicus (Rat)).